The sequence spans 543 residues: Carboxypeptidase Y homolog A (543 aa).

An N-terminal signal peptide occupies residues 1 to 17 (MKLLTTGLLASAALVAA). Residues 18–124 (QEQQVLRADE…KLKNYDLRVK (107 aa)) constitute a propeptide that is removed on maturation. Intrachain disulfides connect cysteine 179/cysteine 419, cysteine 313/cysteine 327, cysteine 337/cysteine 360, cysteine 344/cysteine 353, and cysteine 382/cysteine 389. N-linked (GlcNAc...) asparagine glycosylation is present at asparagine 210. The active site involves serine 266. Aspartate 458 is an active-site residue. N-linked (GlcNAc...) asparagine glycosylation is present at asparagine 509. Histidine 520 is an active-site residue.

The protein belongs to the peptidase S10 family.

The protein localises to the vacuole. It carries out the reaction Release of a C-terminal amino acid with broad specificity.. Vacuolar carboxypeptidase involved in degradation of small peptides. Digests preferentially peptides containing an aliphatic or hydrophobic residue in P1' position, as well as methionine, leucine or phenylalanine in P1 position of ester substrate. The sequence is that of Carboxypeptidase Y homolog A (CPYA) from Arthroderma gypseum (strain ATCC MYA-4604 / CBS 118893) (Microsporum gypseum).